Here is a 411-residue protein sequence, read N- to C-terminus: Serpin A3-1 (411 aa).

An N-terminal signal peptide occupies residues 1 to 24 (MRAERTSFLLALGLLVAGIRSVHC). N-linked (GlcNAc...) asparagine glycans are attached at residues N100, N180, N230, and N264.

The protein belongs to the serpin family. Homodimer. Post-translationally, N-glycosylated. In terms of tissue distribution, detected in all tissues examined (at protein level). Abundantly expressed in liver, kidney and spleen. Lowest levels were observed in diaphragm muscle.

It is found in the cytoplasmic vesicle. It localises to the secretory vesicle. Its subcellular location is the chromaffin granule. The protein resides in the secreted. Its function is as follows. Potent inhibitor of the serine proteases elastase and trypsin. Moderately inhibits the serine proteases plasmin and chymotrypsin, and the thiol protease proenkephalin-processing enzyme. Does not inhibit the serine proteases cathepsin G, furin, kallikrein, thrombin, tissue plasminogen activator and urokinase, or the cysteine proteases cathepsin B, cathepsin L and papain. The protein is Serpin A3-1 of Bos taurus (Bovine).